The following is a 99-amino-acid chain: Bombyxin A-1 homolog (99 aa).

The N-terminal stretch at 1-19 is a signal peptide; the sequence is MKTQVLFLVFALAAVMVSG. Intrachain disulfides connect cysteine 27–cysteine 86, cysteine 39–cysteine 99, and cysteine 85–cysteine 90. Residues 48–76 constitute a propeptide, c peptide like; sequence TPYISPENEGYGWRWLEPQRARQLDGARG.

This sequence belongs to the insulin family. Heterodimer of a B chain and an A chain linked by two disulfide bonds.

The protein resides in the secreted. In terms of biological role, brain peptide responsible for activation of prothoracic glands to produce ecdysone in insects. This chain is Bombyxin A-1 homolog (SBXA1), found in Samia cynthia (Ailanthus silkmoth).